Here is a 205-residue protein sequence, read N- to C-terminus: N-(5'-phosphoribosyl)anthranilate isomerase (205 aa).

The protein belongs to the TrpF family.

It carries out the reaction N-(5-phospho-beta-D-ribosyl)anthranilate = 1-(2-carboxyphenylamino)-1-deoxy-D-ribulose 5-phosphate. Its pathway is amino-acid biosynthesis; L-tryptophan biosynthesis; L-tryptophan from chorismate: step 3/5. This is N-(5'-phosphoribosyl)anthranilate isomerase from Thiobacillus denitrificans (strain ATCC 25259 / T1).